The chain runs to 385 residues: Di-N-acetylchitobiase (385 aa).

Residues 1–38 (MSRPQLRRWRLVSSPPSGVPGLALLALLALLALRLAAG) form the signal peptide. The GH18 domain occupies 39-385 (TDCPCPEPEL…EVLKPKLLQR (347 aa)). The Proton donor role is filled by Glu143. Residues Asn193, Asn228, Asn262, and Asn299 are each glycosylated (N-linked (GlcNAc...) asparagine).

This sequence belongs to the glycosyl hydrolase 18 family.

It localises to the lysosome. In terms of biological role, involved in the degradation of asparagine-linked glycoproteins. Hydrolyze of N-acetyl-beta-D-glucosamine (1-4)N-acetylglucosamine chitobiose core from the reducing end of the bond, it requires prior cleavage by glycosylasparaginase. The protein is Di-N-acetylchitobiase (CTBS) of Homo sapiens (Human).